The following is a 3470-amino-acid chain: Dynein axonemal heavy chain 5 (3470 aa).

Positions 1–1938 (MFRIGRRQLW…MIHITDVAFT (1938 aa)) are stem. The tract at residues 899–918 (EKVRHENASPNGDTSGGGEG) is disordered. 4 AAA regions span residues 1939-2161 (YQNE…VLRT), 2221-2440 (TAIS…IQNL), 2547-2800 (VYPP…IWQG), and 2913-3167 (LYNE…FRRS). Residues 1977-1984 (GPAGTGKT) and 2259-2266 (GPSGSGKT) each bind ATP. Coiled-coil stretches lie at residues 3207-3241 (LKEA…VLKE) and 3434-3468 (HALA…AMTE).

It belongs to the dynein heavy chain family. In terms of assembly, interacts with DNAL1. Consists of at least two heavy chains and a number of intermediate and light chains.

Its subcellular location is the cytoplasm. It is found in the cytoskeleton. The protein localises to the cilium axoneme. Force generating protein of respiratory cilia. Produces force towards the minus ends of microtubules. Dynein has ATPase activity; the force-producing power stroke is thought to occur on release of ADP. Required for structural and functional integrity of the cilia of ependymal cells lining the brain ventricles. The protein is Dynein axonemal heavy chain 5 of Rattus norvegicus (Rat).